The chain runs to 309 residues: MAFLSKFGNILKQTTNKQLNAQVSLSSPSLFQAIRCMSSSKLFIGGMAYSMDEDSLREAFTKYGEVVDTRVILDRETGRSRGFGFVTFTSSEAASSAIQALDGRDLHGRVVKVNYANDRTSGGGFGGGGYGGGGGGYGGSGGYGGGAGGYGGSGGYGGGAGGYGGNSGGGYGGNAAGGYGGSGAGGYGGDATGHGGAGGGYGSSGGFGSSGNTYGEGSSASAGAVGDYNGSSGYGSANTYGSSNGGFAGDSQFGGSPVGNSSQFGGDNTQFTAGGQFGGEDQFGSMEKSETKMEDGPIGGEFEDVAKRA.

Residues 1-37 constitute a mitochondrion transit peptide; that stretch reads MAFLSKFGNILKQTTNKQLNAQVSLSSPSLFQAIRCM. In terms of domain architecture, RRM spans 40-118; it reads SKLFIGGMAY…RVVKVNYAND (79 aa). The disordered stretch occupies residues 247–309; sequence FAGDSQFGGS…GEFEDVAKRA (63 aa). Residues 258 to 273 are compositionally biased toward polar residues; sequence VGNSSQFGGDNTQFTA.

This sequence belongs to the GR-RBP family. Homodimer. Interacts with ORRM2 and MORF8/RIP1. Interacts with RBG5/ORRM4. Binds to RBG2/ORRM5.

The protein localises to the mitochondrion. Its function is as follows. Possibly has a role in RNA transcription or processing during stress. Involved in C-to-U editing of mitochondrial RNA. Functions as a minor mitochondrial editing factor. Controls 6 percent of the mitochondrial editing sites. This is Glycine-rich RNA-binding protein 3, mitochondrial from Arabidopsis thaliana (Mouse-ear cress).